The following is a 172-amino-acid chain: uncharacterized protein (172 aa).

The Lumenal portion of the chain corresponds to 1–101; the sequence is MEHVSKRSIG…RYDINTRPLV (101 aa). A helical transmembrane segment spans residues 102–122; it reads VVLAISIVFFGCLLVLKDIII. Residues 123–145 are Cytoplasmic-facing; it reads QSSENILSVSKWKIIGASFMGTP. The chain crosses the membrane as a helical span at residues 146 to 164; it reads YTGLLTGLVGPLLSPFSAV. Residues 165–172 lie on the Lumenal side of the membrane; sequence SSWLSFIF.

It localises to the endoplasmic reticulum membrane. This is an uncharacterized protein from Saccharomyces cerevisiae (strain ATCC 204508 / S288c) (Baker's yeast).